Consider the following 1358-residue polypeptide: Xanthine dehydrogenase (1358 aa).

A 2Fe-2S ferredoxin-type domain is found at 18–107 (NQLLFFLNGE…GMAVTTIEGL (90 aa)). Residues cysteine 56, cysteine 61, cysteine 64, cysteine 89, cysteine 129, cysteine 132, cysteine 164, and cysteine 166 each contribute to the [2Fe-2S] cluster site. Positions 253–447 (FTGSRVTWYT…ESVFIPYTRP (195 aa)) constitute an FAD-binding PCMH-type domain. Residues 281 to 288 (IVVGNTEI), phenylalanine 366, 376 to 380 (SIGGN), aspartate 389, leucine 437, and lysine 455 contribute to the FAD site. The Mo-molybdopterin site is built by glutamine 805 and phenylalanine 836. Substrate-binding residues include glutamate 840 and arginine 918. Arginine 950 provides a ligand contact to Mo-molybdopterin. Tyrosine 952 and threonine 1048 together coordinate substrate. Residue alanine 1117 coordinates Mo-molybdopterin. Residue glutamate 1302 is the Proton acceptor of the active site.

The protein belongs to the xanthine dehydrogenase family. In terms of assembly, homodimer. Requires FAD as cofactor. It depends on Mo-molybdopterin as a cofactor. The cofactor is [2Fe-2S] cluster.

It is found in the peroxisome. The enzyme catalyses xanthine + NAD(+) + H2O = urate + NADH + H(+). The catalysed reaction is hypoxanthine + NAD(+) + H2O = xanthine + NADH + H(+). Functionally, key enzyme in purine degradation. Catalyzes the oxidation of hypoxanthine to xanthine. Catalyzes the oxidation of xanthine to uric acid. The sequence is that of Xanthine dehydrogenase (xdh) from Dictyostelium discoideum (Social amoeba).